A 132-amino-acid chain; its full sequence is Phosphoribosyl-AMP cyclohydrolase (132 aa).

Residue aspartate 86 participates in Mg(2+) binding. Cysteine 87 is a Zn(2+) binding site. Residues aspartate 88 and aspartate 90 each contribute to the Mg(2+) site. Zn(2+) is bound by residues cysteine 103 and cysteine 110.

The protein belongs to the PRA-CH family. Homodimer. Mg(2+) serves as cofactor. Requires Zn(2+) as cofactor.

The protein resides in the cytoplasm. The enzyme catalyses 1-(5-phospho-beta-D-ribosyl)-5'-AMP + H2O = 1-(5-phospho-beta-D-ribosyl)-5-[(5-phospho-beta-D-ribosylamino)methylideneamino]imidazole-4-carboxamide. It functions in the pathway amino-acid biosynthesis; L-histidine biosynthesis; L-histidine from 5-phospho-alpha-D-ribose 1-diphosphate: step 3/9. In terms of biological role, catalyzes the hydrolysis of the adenine ring of phosphoribosyl-AMP. The chain is Phosphoribosyl-AMP cyclohydrolase from Haloquadratum walsbyi (strain DSM 16790 / HBSQ001).